A 112-amino-acid polypeptide reads, in one-letter code: Probable insulin-like peptide beta-type 5 (112 aa).

Positions 1–19 are cleaved as a signal peptide; it reads MNSVFTIIFVLCALQVAAS. Residues 20–58 constitute a propeptide, removed; by convertase egl-3; the sequence is FRQSFGPSMSEESASMQLLRELQHNMMESAHRPMPRARR. 4 disulfide bridges follow: Cys-68/Cys-97, Cys-80/Cys-110, Cys-84/Cys-111, and Cys-96/Cys-101.

Belongs to the insulin family. May be processed by serine endoprotease bli-4. Expressed by ASI and ASJ sensory neurons.

The protein resides in the secreted. In terms of biological role, probable insulin-like peptide which negatively regulates synapse development at the neuromuscular junctions. Probably acts as a daf-2/InsR agonist ligand to prevent dauer formation under optimal environmental conditions. Acts on AWC sensory neurons to regulate high salt chemotaxis responses. This chain is Probable insulin-like peptide beta-type 5 (ins-6), found in Caenorhabditis elegans.